A 375-amino-acid polypeptide reads, in one-letter code: MNPIHARFSSVEALRHSNVDIQAIKSEGQLEVNGKRYEIRAAADGSIAVLRPDQQSKADKFFKGAAHLIGGQSQRAQIAQVLNEKAAAVPRLDRMLGRRFDLEKGGSSAVGAAIKAADSRLTSKQTFASFQQWAEKAEALGRYRNRYLHDLQEGHARHNAYECGRVKNITWKRYRLSITRKTLSYAPQIHDDREEEELDLGRYIAEDRNARTGFFRMVPKDQRAPETNSGRLTIGVEPKYGAQLALAMATLMDKHKSVTQGKVVGPAKYGQQTDSAILYINGDLAKAVKLGEKLKKLSGIPPEGFVEHTPLSMQSTGLGLSYAESVEGQPSSHGQARTHVIMDALKGQGPMENRLKMALAERGYDPENPALRARN.

In terms of biological role, unknown. May serve a regulatory function. The chain is Protein HrmA (hrmA) from Pseudomonas syringae pv. syringae.